The following is a 55-amino-acid chain: Large ribosomal subunit protein bL33 (55 aa).

The protein belongs to the bacterial ribosomal protein bL33 family.

This Dehalococcoides mccartyi (strain ATCC BAA-2266 / KCTC 15142 / 195) (Dehalococcoides ethenogenes (strain 195)) protein is Large ribosomal subunit protein bL33.